The following is a 426-amino-acid chain: Diaminobutyrate--2-oxoglutarate transaminase (426 aa).

N6-(pyridoxal phosphate)lysine is present on Lys274.

Belongs to the class-III pyridoxal-phosphate-dependent aminotransferase family. The cofactor is pyridoxal 5'-phosphate.

The enzyme catalyses L-2,4-diaminobutanoate + 2-oxoglutarate = L-aspartate 4-semialdehyde + L-glutamate. It functions in the pathway amine and polyamine biosynthesis; ectoine biosynthesis; L-ectoine from L-aspartate 4-semialdehyde: step 1/3. In terms of biological role, catalyzes reversively the conversion of L-aspartate beta-semialdehyde (ASA) to L-2,4-diaminobutyrate (DABA) by transamination with L-glutamate. The chain is Diaminobutyrate--2-oxoglutarate transaminase (ectB) from Oceanobacillus iheyensis (strain DSM 14371 / CIP 107618 / JCM 11309 / KCTC 3954 / HTE831).